The following is a 550-amino-acid chain: Acidic amino acid decarboxylase GADL1 (550 aa).

Lys362 carries the N6-(pyridoxal phosphate)lysine modification.

The protein belongs to the group II decarboxylase family. Homodimer. Pyridoxal 5'-phosphate serves as cofactor. As to expression, expressed in skeletal muscles and kidney (at protein level). Expressed in skeletal muscle and weakly in brain. Not expressed in liver or kidney. Expressed in brain, olfactory bulb, liver, muscle and kidney with the highest expression in olfactory bulb and almost not detected in liver (at protein level).

It catalyses the reaction L-aspartate + H(+) = beta-alanine + CO2. The catalysed reaction is 3-sulfino-L-alanine + H(+) = hypotaurine + CO2. The enzyme catalyses L-cysteate + H(+) = taurine + CO2. Activated weakly by 0.2-0.4 mM Li(+). Inhibited by bis-carboxymethyl-trithiocarbonate, ethylxanthogenacetic acid and 2,5-disulfoaniline. Catalyzes the decarboxylation of L-aspartate, 3-sulfino-L-alanine (cysteine sulfinic acid), and L-cysteate to beta-alanine, hypotaurine and taurine, respectively. The preferred substrate is L-aspartate. Does not exhibit any decarboxylation activity toward glutamate. The protein is Acidic amino acid decarboxylase GADL1 of Mus musculus (Mouse).